A 259-amino-acid chain; its full sequence is MTTETAEKVEYIIETKDVDLFYGSKQALQKIALNIKKNQVTALIGPSGCGKSTFLRTLNRMNDLIPNVKTTGEIHIGGENVQDPKIDMVNLRKKVGMVFQQANPFPFSIYDNVAYGPRMHGIKDKKVLDEIVERSLRQAALWEEVHDRLDRSAIGMSGGQQQRLCIARVLAVKPDVILMDEPTSALDPISTAKVEDLILELKKDYTIVIVTHNMQQASRISDETAFFLNGRIVEFADTTSIFTNPAEKETEDYISGRFG.

The region spanning 13 to 254 is the ABC transporter domain; sequence IETKDVDLFY…PAEKETEDYI (242 aa). Residue 45-52 coordinates ATP; that stretch reads GPSGCGKS.

The protein belongs to the ABC transporter superfamily. Phosphate importer (TC 3.A.1.7) family. As to quaternary structure, the complex is composed of two ATP-binding proteins (PstB), two transmembrane proteins (PstC and PstA) and a solute-binding protein (PstS).

The protein resides in the cell membrane. It carries out the reaction phosphate(out) + ATP + H2O = ADP + 2 phosphate(in) + H(+). Functionally, part of the ABC transporter complex PstSACB involved in phosphate import. Responsible for energy coupling to the transport system. The sequence is that of Phosphate import ATP-binding protein PstB 1 from Listeria innocua serovar 6a (strain ATCC BAA-680 / CLIP 11262).